The chain runs to 304 residues: Oxygen-dependent coproporphyrinogen-III oxidase (304 aa).

Residue serine 94 coordinates substrate. Histidine 98 and histidine 108 together coordinate a divalent metal cation. Residue histidine 108 is the Proton donor of the active site. A substrate-binding site is contributed by 110–112 (NVR). Residues histidine 147 and histidine 177 each coordinate a divalent metal cation. Residues 242–277 (YVEFNLVYDRGTLFGLQTGGRTESILMSMPPLVRWQ) are important for dimerization. Residue 260-262 (GGR) coordinates substrate.

It belongs to the aerobic coproporphyrinogen-III oxidase family. In terms of assembly, homodimer. Requires a divalent metal cation as cofactor.

The protein localises to the cytoplasm. It carries out the reaction coproporphyrinogen III + O2 + 2 H(+) = protoporphyrinogen IX + 2 CO2 + 2 H2O. The protein operates within porphyrin-containing compound metabolism; protoporphyrin-IX biosynthesis; protoporphyrinogen-IX from coproporphyrinogen-III (O2 route): step 1/1. Its function is as follows. Involved in the heme biosynthesis. Catalyzes the aerobic oxidative decarboxylation of propionate groups of rings A and B of coproporphyrinogen-III to yield the vinyl groups in protoporphyrinogen-IX. In Shewanella amazonensis (strain ATCC BAA-1098 / SB2B), this protein is Oxygen-dependent coproporphyrinogen-III oxidase.